We begin with the raw amino-acid sequence, 405 residues long: Probable tRNA sulfurtransferase (405 aa).

Residues 60–165 (DAVINRLKKV…SNGIFLTSEV (106 aa)) form the THUMP domain. Residues 183 to 184 (ML), 208 to 209 (HF), Arg265, Gly287, and Gln296 each bind ATP.

This sequence belongs to the ThiI family.

It localises to the cytoplasm. It carries out the reaction [ThiI sulfur-carrier protein]-S-sulfanyl-L-cysteine + a uridine in tRNA + 2 reduced [2Fe-2S]-[ferredoxin] + ATP + H(+) = [ThiI sulfur-carrier protein]-L-cysteine + a 4-thiouridine in tRNA + 2 oxidized [2Fe-2S]-[ferredoxin] + AMP + diphosphate. The catalysed reaction is [ThiS sulfur-carrier protein]-C-terminal Gly-Gly-AMP + S-sulfanyl-L-cysteinyl-[cysteine desulfurase] + AH2 = [ThiS sulfur-carrier protein]-C-terminal-Gly-aminoethanethioate + L-cysteinyl-[cysteine desulfurase] + A + AMP + 2 H(+). It participates in cofactor biosynthesis; thiamine diphosphate biosynthesis. Catalyzes the ATP-dependent transfer of a sulfur to tRNA to produce 4-thiouridine in position 8 of tRNAs, which functions as a near-UV photosensor. Also catalyzes the transfer of sulfur to the sulfur carrier protein ThiS, forming ThiS-thiocarboxylate. This is a step in the synthesis of thiazole, in the thiamine biosynthesis pathway. The sulfur is donated as persulfide by IscS. This Pediococcus pentosaceus (strain ATCC 25745 / CCUG 21536 / LMG 10740 / 183-1w) protein is Probable tRNA sulfurtransferase.